A 567-amino-acid chain; its full sequence is Urease subunit alpha (567 aa).

In terms of domain architecture, Urease spans 129-567; it reads GGIDVHVHFI…VPMSQRYFLF (439 aa). Positions 134, 136, and 217 each coordinate Ni(2+). At lysine 217 the chain carries N6-carboxylysine. Residue histidine 219 coordinates substrate. Ni(2+) is bound by residues histidine 246 and histidine 272. The active-site Proton donor is the histidine 320. Aspartate 360 serves as a coordination point for Ni(2+).

This sequence belongs to the metallo-dependent hydrolases superfamily. Urease alpha subunit family. Heterotrimer of UreA (gamma), UreB (beta) and UreC (alpha) subunits. Three heterotrimers associate to form the active enzyme. Ni cation serves as cofactor. In terms of processing, carboxylation allows a single lysine to coordinate two nickel ions.

It localises to the cytoplasm. The enzyme catalyses urea + 2 H2O + H(+) = hydrogencarbonate + 2 NH4(+). Its pathway is nitrogen metabolism; urea degradation; CO(2) and NH(3) from urea (urease route): step 1/1. This chain is Urease subunit alpha, found in Blochmanniella floridana.